A 403-amino-acid chain; its full sequence is MKNKVFASIGDAVKDIKVGRMVIVVDDPGRENEGDLICAAEKASPEVINFMTKYARGLICVPMKHERLKELEIENMVEKPTEKKGCSFTVSVDYKIGTTTGISAYDRSVTVRKLIDKTAKHEDFARPGHIFPLRCKEGGVLARTGHTEAAVDLVRLAGFYPAGIICEIMNNDGTMARMSDLIKFAKKHDLHIITIGELVNYRRRTEKFISEIVNVDLPTRYGDFKLVLFEDLITKDSHIAVVKGVVKNRQNVLVRVHSSCETGDIFHSLRCDCGDQLETALKAVGEAEQGVVLYIHQEGRGIGLANKLKAYRLQEKGMDTVEANKALGFDPDLRDYGIGAQMLSELGIKSINLMTNNPGKINGLESYGLKITKRVPLEISPSKSNEKYLKTKKEKMGHMLKKV.

A DHBP synthase region spans residues 1–204 (MKNKVFASIG…IGELVNYRRR (204 aa)). Residues 30–31 (RE), D35, 143–147 (RTGHT), and E167 each bind D-ribulose 5-phosphate. E31 is a binding site for Mg(2+). A Mg(2+)-binding site is contributed by H146. A GTP cyclohydrolase II region spans residues 205-403 (TEKFISEIVN…EKMGHMLKKV (199 aa)). 255–259 (RVHSS) lines the GTP pocket. C260, C271, and C273 together coordinate Zn(2+). GTP-binding positions include Q276, 298–300 (EGR), and T320. The active-site Proton acceptor; for GTP cyclohydrolase activity is D332. Residue R334 is the Nucleophile; for GTP cyclohydrolase activity of the active site. The GTP site is built by T355 and K360.

In the N-terminal section; belongs to the DHBP synthase family. It in the C-terminal section; belongs to the GTP cyclohydrolase II family. It depends on Mg(2+) as a cofactor. Requires Mn(2+) as cofactor. Zn(2+) serves as cofactor.

The catalysed reaction is D-ribulose 5-phosphate = (2S)-2-hydroxy-3-oxobutyl phosphate + formate + H(+). The enzyme catalyses GTP + 4 H2O = 2,5-diamino-6-hydroxy-4-(5-phosphoribosylamino)-pyrimidine + formate + 2 phosphate + 3 H(+). The protein operates within cofactor biosynthesis; riboflavin biosynthesis; 2-hydroxy-3-oxobutyl phosphate from D-ribulose 5-phosphate: step 1/1. It functions in the pathway cofactor biosynthesis; riboflavin biosynthesis; 5-amino-6-(D-ribitylamino)uracil from GTP: step 1/4. Its function is as follows. Catalyzes the conversion of D-ribulose 5-phosphate to formate and 3,4-dihydroxy-2-butanone 4-phosphate. Catalyzes the conversion of GTP to 2,5-diamino-6-ribosylamino-4(3H)-pyrimidinone 5'-phosphate (DARP), formate and pyrophosphate. The polypeptide is Riboflavin biosynthesis protein RibBA (Endomicrobium trichonymphae).